A 500-amino-acid polypeptide reads, in one-letter code: Na(+)/H(+) antiporter NhaB (500 aa).

A run of 12 helical transmembrane segments spans residues 28–50, 58–78, 96–116, 129–149, 150–170, 205–225, 241–261, 311–331, 350–370, 394–414, 449–469, and 477–497; these read FLMLNALVLWSVGPVAAGWLLVI, MALKCYPLMPGGLLLIEALLL, VILLLMFMVAGIYFMKDLLLF, ALLALMFCFLSAFLSAFLDAL, TVTAVIISAAVGFYSVYHRVA, LLMHGAVGTALGGVCTLVGEP, FFLKVAPVSLPVLVAGLVTCL, ILIAGLAFHIAEVGLIGLMVI, FKDAMPFTALLVVFFAVVAVI, MLFIANGLLSAISDNVFVATI, VATPNGQAAFLFLLTSAIAPL, and MVWMALPYTVVMGLLGWYAVS.

The protein belongs to the NhaB Na(+)/H(+) (TC 2.A.34) antiporter family.

Its subcellular location is the cell inner membrane. The catalysed reaction is 2 Na(+)(in) + 3 H(+)(out) = 2 Na(+)(out) + 3 H(+)(in). Na(+)/H(+) antiporter that extrudes sodium in exchange for external protons. The protein is Na(+)/H(+) antiporter NhaB of Pseudomonas fluorescens (strain Pf0-1).